The primary structure comprises 791 residues: Protein FAM47A (791 aa).

3 disordered regions span residues 195 to 257, 274 to 409, and 449 to 573; these read PVSH…TRRR, EDAR…TGVC, and VKKT…SEPP. Basic and acidic residues-rich tracts occupy residues 274–288 and 333–342; these read EDARAPCEGREKTTD and GESHLRLEHS. Residues 349–358 show a composition bias toward polar residues; it reads SLRSEPSETG. Basic and acidic residues predominate over residues 449-462; it reads VKKTKEPTEPHKSP.

It belongs to the FAM47 family.

This Homo sapiens (Human) protein is Protein FAM47A (FAM47A).